The chain runs to 488 residues: Aerolysin (488 aa).

The N-terminal stretch at 1–24 (MMNRIITANLAFLASSLMLAQVQA) is a signal peptide. Intrachain disulfides connect Cys-43–Cys-99 and Cys-183–Cys-188. The segment at 69–85 (WQITGLADRWVIMGPGY) is interaction with host N-linked glycan. A part of the transmembrane beta-barrel after proteolytic activation of the toxin and insertion into the host membrane region spans residues 256–288 (YSLSEKVTTKNKFQWPLVGETELAIEIAASQSW). The segment at 346–355 (RWGGNAWYTH) is interaction with glycans from host GPI-anchor. Residues 444–488 (TRSAKAAQLRSASAEEVALTSVDLDSEALANEGFGNVSLTIVPVQ) constitute a propeptide that is removed on maturation.

This sequence belongs to the aerolysin family. As to quaternary structure, homodimer in solution; homoheptamer in the host membrane. After binding to GPI-anchored proteins in target membranes and proteolytic removal of the C-terminal propeptide, the protein assembles into a heptameric pre-pore complex. A further conformation change leads to insertion into the host membrane. Post-translationally, proteolytic cleavage and subsequent release of the propeptide trigger a major conformation change, leading to the formation of a heptameric pre-pore that then inserts into the host membrane.

It localises to the secreted. The protein localises to the host cell membrane. Its function is as follows. Secreted, cytolytic toxin that forms pores in host membranes after proteolytic removal of a C-terminal propeptide, leading to destruction of the membrane permeability barrier and cell death. The pores are formed by transmembrane beta-strands and are approximately 3 nm in diameter. In Aeromonas sobria, this protein is Aerolysin (asa1).